We begin with the raw amino-acid sequence, 143 residues long: Auxin-responsive protein SAUR67 (143 aa).

It belongs to the ARG7 family.

The protein localises to the cell membrane. May promote auxin-stimulated organ elongation, such as hypocotyls, stamen filaments and petals. This chain is Auxin-responsive protein SAUR67, found in Arabidopsis thaliana (Mouse-ear cress).